The sequence spans 298 residues: Possible hemolysin C (298 aa).

CBS domains lie at 80–141 (MVPR…QNGC) and 145–202 (LIRK…IDDE).

It belongs to the UPF0053 family. Hemolysin C subfamily.

In Rickettsia canadensis (strain McKiel), this protein is Possible hemolysin C (tlyC).